A 426-amino-acid chain; its full sequence is Histidine--tRNA ligase 1 (426 aa).

The protein belongs to the class-II aminoacyl-tRNA synthetase family. Homodimer.

The protein resides in the cytoplasm. The enzyme catalyses tRNA(His) + L-histidine + ATP = L-histidyl-tRNA(His) + AMP + diphosphate + H(+). This Bacillus cereus (strain ATCC 14579 / DSM 31 / CCUG 7414 / JCM 2152 / NBRC 15305 / NCIMB 9373 / NCTC 2599 / NRRL B-3711) protein is Histidine--tRNA ligase 1.